The sequence spans 25 residues: Bifunctional chitinase/lysozyme (25 aa).

This sequence belongs to the glycosyl hydrolase 19 family. Chitinase class I subfamily. In terms of assembly, monomer.

The protein resides in the secreted. It is found in the extracellular space. The catalysed reaction is Random endo-hydrolysis of N-acetyl-beta-D-glucosaminide (1-&gt;4)-beta-linkages in chitin and chitodextrins.. The enzyme catalyses Hydrolysis of (1-&gt;4)-beta-linkages between N-acetylmuramic acid and N-acetyl-D-glucosamine residues in a peptidoglycan and between N-acetyl-D-glucosamine residues in chitodextrins.. Bifunctional enzyme with lysozyme/chitinase activity. In Carica papaya (Papaya), this protein is Bifunctional chitinase/lysozyme.